A 112-amino-acid chain; its full sequence is Putative UPF0320 protein YEL074W (112 aa).

Positions 93-112 are disordered; sequence EKSPSKSPKHKNILPFNFTK.

This sequence belongs to the UPF0320 family.

In Saccharomyces cerevisiae (strain ATCC 204508 / S288c) (Baker's yeast), this protein is Putative UPF0320 protein YEL074W.